We begin with the raw amino-acid sequence, 246 residues long: Probable transcriptional regulatory protein CLK_2466 (246 aa).

It belongs to the TACO1 family.

Its subcellular location is the cytoplasm. The sequence is that of Probable transcriptional regulatory protein CLK_2466 from Clostridium botulinum (strain Loch Maree / Type A3).